Consider the following 445-residue polypeptide: N-succinylarginine dihydrolase (445 aa).

Substrate is bound by residues 19 to 28, N110, and 137 to 138; these read AGLSYGNVAS and HR. E174 is an active-site residue. R214 provides a ligand contact to substrate. The active site involves H250. Residues D252 and N363 each coordinate substrate. The active-site Nucleophile is C369.

Belongs to the succinylarginine dihydrolase family. In terms of assembly, homodimer.

The catalysed reaction is N(2)-succinyl-L-arginine + 2 H2O + 2 H(+) = N(2)-succinyl-L-ornithine + 2 NH4(+) + CO2. It functions in the pathway amino-acid degradation; L-arginine degradation via AST pathway; L-glutamate and succinate from L-arginine: step 2/5. Catalyzes the hydrolysis of N(2)-succinylarginine into N(2)-succinylornithine, ammonia and CO(2). The sequence is that of N-succinylarginine dihydrolase from Shewanella loihica (strain ATCC BAA-1088 / PV-4).